A 122-amino-acid polypeptide reads, in one-letter code: Large ribosomal subunit protein bL12 (122 aa).

It belongs to the bacterial ribosomal protein bL12 family. As to quaternary structure, homodimer. Part of the ribosomal stalk of the 50S ribosomal subunit. Forms a multimeric L10(L12)X complex, where L10 forms an elongated spine to which 2 to 4 L12 dimers bind in a sequential fashion. Binds GTP-bound translation factors.

In terms of biological role, forms part of the ribosomal stalk which helps the ribosome interact with GTP-bound translation factors. Is thus essential for accurate translation. This chain is Large ribosomal subunit protein bL12, found in Fusobacterium nucleatum subsp. nucleatum (strain ATCC 25586 / DSM 15643 / BCRC 10681 / CIP 101130 / JCM 8532 / KCTC 2640 / LMG 13131 / VPI 4355).